Consider the following 372-residue polypeptide: Queuine tRNA-ribosyltransferase (372 aa).

Asp92 serves as the catalytic Proton acceptor. Substrate contacts are provided by residues 92–96, Asp146, Gln188, and Gly215; that span reads DSGGF. The RNA binding stretch occupies residues 246 to 252; it reads GIGTLRE. Residue Asp265 is the Nucleophile of the active site. Residues 270-274 are RNA binding; important for wobble base 34 recognition; that stretch reads TRLGR. The Zn(2+) site is built by Cys303, Cys305, Cys308, and His334.

Belongs to the queuine tRNA-ribosyltransferase family. In terms of assembly, homodimer. Within each dimer, one monomer is responsible for RNA recognition and catalysis, while the other monomer binds to the replacement base PreQ1. It depends on Zn(2+) as a cofactor.

The enzyme catalyses 7-aminomethyl-7-carbaguanine + guanosine(34) in tRNA = 7-aminomethyl-7-carbaguanosine(34) in tRNA + guanine. It functions in the pathway tRNA modification; tRNA-queuosine biosynthesis. Catalyzes the base-exchange of a guanine (G) residue with the queuine precursor 7-aminomethyl-7-deazaguanine (PreQ1) at position 34 (anticodon wobble position) in tRNAs with GU(N) anticodons (tRNA-Asp, -Asn, -His and -Tyr). Catalysis occurs through a double-displacement mechanism. The nucleophile active site attacks the C1' of nucleotide 34 to detach the guanine base from the RNA, forming a covalent enzyme-RNA intermediate. The proton acceptor active site deprotonates the incoming PreQ1, allowing a nucleophilic attack on the C1' of the ribose to form the product. After dissociation, two additional enzymatic reactions on the tRNA convert PreQ1 to queuine (Q), resulting in the hypermodified nucleoside queuosine (7-(((4,5-cis-dihydroxy-2-cyclopenten-1-yl)amino)methyl)-7-deazaguanosine). The protein is Queuine tRNA-ribosyltransferase of Prochlorococcus marinus (strain MIT 9313).